Here is a 505-residue protein sequence, read N- to C-terminus: MRFSCLALLPGVALLLASALLASASDVLELTDENFESRVSDTGSAGLMLVEFFAPWCGHCKRLAPEYEAAATRLKGIVPLAKVDCTANTNTCNKYGVSGYPTLKIFRDGEEAGAYDGPRTADGIVSHLKKQAGPASVPLRTEDEFKKFISDKDASVVGFFRDLFSDGHSEFLKAASNLRDNYRFAHTNVESLVKEYDDNGEGITIFRPLHLANKFEDKIVAYTEKKMTSGKIKKFIQESIFGLCPHMTEDNKDLIQGKDLLTAYYDVDYEKNTKGSNYWRNRVMMVAKTFLDAGHKLNFAVASRKTFSHELSDFGLESTTGEIPVVAIRTAKGEKFVMQEEFSRDGKALERFLQEYFDGNLKRYLKSEPIPETNEGPVKVVVAESFDDIVNAEDKDVLIEFYAPWCGHCKNLEPKYKELGEKLSKDPNIVIAKMDATANDVPSPYEVKGFPTIYFSPANKKLTPKKYEGGRELNDFISYLQREATNPPIIQEEKPKKKKKAQEDL.

Positions 1 to 24 (MRFSCLALLPGVALLLASALLASA) are cleaved as a signal peptide. The Thioredoxin 1 domain maps to 25–133 (SDVLELTDEN…IVSHLKKQAG (109 aa)). Residues Cys57 and Cys60 each act as nucleophile in the active site. The cysteines at positions 57 and 60 are disulfide-linked. Lys61 is modified (N6-methyllysine). The cysteines at positions 85 and 92 are disulfide-linked. The residue at position 129 (Lys129) is an N6-succinyllysine. N6-acetyllysine is present on Lys152. Lys218 carries the post-translational modification N6-succinyllysine. Position 252 is an N6-acetyllysine (Lys252). Thr319 is subject to Phosphothreonine. Residues 343 to 485 (SRDGKALERF…FISYLQREAT (143 aa)) enclose the Thioredoxin 2 domain. The residue at position 362 (Lys362) is an N6-acetyllysine. Residues Cys406 and Cys409 each act as nucleophile in the active site. Cys406 and Cys409 are joined by a disulfide. The interval 484-505 (ATNPPIIQEEKPKKKKKAQEDL) is disordered. Basic and acidic residues predominate over residues 491-505 (QEEKPKKKKKAQEDL). Lys494 carries the post-translational modification N6-acetyllysine. Positions 502–505 (QEDL) match the Prevents secretion from ER motif.

The protein belongs to the protein disulfide isomerase family. In terms of assembly, part of the major histocompatibility complex class I (MHC I) peptide loading complex composed of TAP1, TAP2, B2M, MHC heavy chain, TAPBP, PDIA3, and CALR. Interacts with ERP27 and CANX. Interacts with SERPINA2 and with SERPINA1. Interacts with ATP2A2. In terms of processing, within the major histocompatibility complex class I (MHC I) peptide loading complex forms reversible disulfide-linked heterodimers with TAPBP as part of its protein folding chaperone activity. This is essential to assist the dynamic assembly of the MHC I complex with high affinity antigens in the endoplasmic reticulum. Post-translationally, phosphorylated. As to expression, in caput epididymal spermatozoa, detected in the head, mid and principal pieces. In cauda epididymal spermatozoa detected only in the acrosome (at protein level).

It localises to the endoplasmic reticulum. It is found in the endoplasmic reticulum lumen. Its subcellular location is the melanosome. It carries out the reaction Catalyzes the rearrangement of -S-S- bonds in proteins.. Seems to be inhibited by acidic phospholipids. Protein disulfide isomerase that catalyzes the formation, isomerization, and reduction or oxidation of disulfide bonds in client proteins and functions as a protein folding chaperone. Core component of the major histocompatibility complex class I (MHC I) peptide loading complex where it functions as an essential folding chaperone for TAPBP. Through TAPBP, assists the dynamic assembly of the MHC I complex with high affinity antigens in the endoplasmic reticulum. Therefore, plays a crucial role in the presentation of antigens to cytotoxic T cells in adaptive immunity. The sequence is that of Protein disulfide-isomerase A3 (Pdia3) from Rattus norvegicus (Rat).